The primary structure comprises 302 residues: Gigasin-6 (302 aa).

A signal peptide spans 1–22 (MSSRNLLYSSVVLFLVLFYCHG). Residues 75–95 (ITTDTLFGLGGISALFANILI) form a helical membrane-spanning segment.

In terms of tissue distribution, component of the organic matrix of calcified shell layers.

The protein localises to the membrane. This Magallana gigas (Pacific oyster) protein is Gigasin-6.